Reading from the N-terminus, the 291-residue chain is 5'-3' exonuclease (291 aa).

Positions 176-269 (APYQVVEYKG…DLTGLKPIQK (94 aa)) constitute a 5'-3' exonuclease domain.

In terms of biological role, 5'-3' exonuclease acting preferentially on double-stranded DNA. This chain is 5'-3' exonuclease (polA), found in Mycoplasma genitalium (strain ATCC 33530 / DSM 19775 / NCTC 10195 / G37) (Mycoplasmoides genitalium).